The sequence spans 475 residues: Ribulose bisphosphate carboxylase large chain (475 aa).

The propeptide occupies 1–2; it reads MS. Residue P3 is modified to N-acetylproline. Residue K14 is modified to N6,N6,N6-trimethyllysine. N123 and T173 together coordinate substrate. Residue K175 is the Proton acceptor of the active site. Position 177 (K177) interacts with substrate. The Mg(2+) site is built by K201, D203, and E204. At K201 the chain carries N6-carboxylysine. H294 serves as the catalytic Proton acceptor. Residues R295, H327, and S379 each coordinate substrate.

Belongs to the RuBisCO large chain family. Type I subfamily. In terms of assembly, heterohexadecamer of 8 large chains and 8 small chains; disulfide-linked. The disulfide link is formed within the large subunit homodimers. Mg(2+) is required as a cofactor. The disulfide bond which can form in the large chain dimeric partners within the hexadecamer appears to be associated with oxidative stress and protein turnover.

It localises to the plastid. It is found in the chloroplast. The catalysed reaction is 2 (2R)-3-phosphoglycerate + 2 H(+) = D-ribulose 1,5-bisphosphate + CO2 + H2O. It catalyses the reaction D-ribulose 1,5-bisphosphate + O2 = 2-phosphoglycolate + (2R)-3-phosphoglycerate + 2 H(+). In terms of biological role, ruBisCO catalyzes two reactions: the carboxylation of D-ribulose 1,5-bisphosphate, the primary event in carbon dioxide fixation, as well as the oxidative fragmentation of the pentose substrate in the photorespiration process. Both reactions occur simultaneously and in competition at the same active site. This chain is Ribulose bisphosphate carboxylase large chain, found in Adiantum capillus-veneris (Maidenhair fern).